Reading from the N-terminus, the 438-residue chain is MAPKKRNGFMTFVKEWQANNPVARGLSNSEAVAKCDPIWKSMGDQERGPYNSMAKNANVLERTAKKERLNCLGGSVAEMEIEKNEAISAELQMKRKIERIILTAKNSMELENEEFVFVSFNYFTKALTGDIYVPAEFSACRYSLKGGISSNYSTMINPGHIIYGQSRDAQDHSKTTHKLPLPPQAFGETNMGKLYIDIFNWLSVRNEEKLDQDPVIVYTTPELMPVVKSCFRYLASEAEIDEDERKIMVFDIHHLFYTLKKSVLDVAGVTNDRINFHVTNNFFVKDFFEYTEGISCDYHEKIDRSKYCTNSMVKRWGFTFSDYMCADLAIPLQPGKHIPLKVKPNYTITPASSSTNFDEISLDSYYSAPPRIQKEMGSRDLSPSSSHQSVSRAYVPRDHSVYGGTLDSDEEFPSLGGRRRQLPDKSHFNMGAGKKIAR.

A DNA-binding region (HMG box) is located at residues 2–69; sequence APKKRNGFMT…LERTAKKERL (68 aa). Positions 374 to 438 are disordered; the sequence is KEMGSRDLSP…NMGAGKKIAR (65 aa). Positions 381–391 are enriched in polar residues; sequence LSPSSSHQSVS.

Belongs to the maelstrom family.

The protein localises to the cytoplasm. It is found in the nucleus. Involved both in the piRNA and miRNA metabolic processes. As a component of the meiotic nuage, plays a central role during oogenesis by repressing transposable elements and preventing their mobilization, which is essential for the germline integrity. Repression of transposable elements is mediated via the piRNA metabolic process, which mediates the repression of transposable elements during meiosis by forming complexes composed of piRNAs and Piwi proteins and governs the repression of transposons. As a nuclear component, it is required for proper differentiation in the germline stem cell (GSC) lineage by repressing microRNA-7 (miR-7), thereby acting as an indirect regulator of bag-of-marbles (Bam). Acts by binding to the promoter of miR-7 gene and repressing its expression; miR-7 repression alleviates the Bam repression by miR-7, thereby allowing differentiation in the germline stem cell (GSC) lineage. The protein is Protein maelstrom 2 (mael2) of Drosophila persimilis (Fruit fly).